A 102-amino-acid polypeptide reads, in one-letter code: RNA-binding protein Hfq (102 aa).

The Sm domain maps to aspartate 9–valine 68. Residues valine 63–glutamate 102 form a disordered region. Residues histidine 70–glutamine 96 are compositionally biased toward polar residues.

The protein belongs to the Hfq family. In terms of assembly, homohexamer.

In terms of biological role, RNA chaperone that binds small regulatory RNA (sRNAs) and mRNAs to facilitate mRNA translational regulation in response to envelope stress, environmental stress and changes in metabolite concentrations. Also binds with high specificity to tRNAs. In Citrobacter koseri (strain ATCC BAA-895 / CDC 4225-83 / SGSC4696), this protein is RNA-binding protein Hfq.